The primary structure comprises 79 residues: Conotoxin PnMSGL-03 (79 aa).

Residues 1 to 20 (MSRLGIMVLTLLLLVFIVTS) form the signal peptide. Positions 21-44 (HQDAGEKQATQRDAINFRWRRSLI) are excised as a propeptide. 3 cysteine pairs are disulfide-bonded: C52–C64, C56–C73, and C63–C77. The residue at position 78 (L78) is a Leucine amide.

The protein belongs to the conotoxin O3 superfamily. Expressed by the venom duct.

It localises to the secreted. This Conus pennaceus (Feathered cone) protein is Conotoxin PnMSGL-03.